The chain runs to 353 residues: Tetraacyldisaccharide 4'-kinase (353 aa).

ATP is bound at residue 49–56 (TAGGTGKT).

The protein belongs to the LpxK family.

The catalysed reaction is a lipid A disaccharide + ATP = a lipid IVA + ADP + H(+). The protein operates within glycolipid biosynthesis; lipid IV(A) biosynthesis; lipid IV(A) from (3R)-3-hydroxytetradecanoyl-[acyl-carrier-protein] and UDP-N-acetyl-alpha-D-glucosamine: step 6/6. Its function is as follows. Transfers the gamma-phosphate of ATP to the 4'-position of a tetraacyldisaccharide 1-phosphate intermediate (termed DS-1-P) to form tetraacyldisaccharide 1,4'-bis-phosphate (lipid IVA). The chain is Tetraacyldisaccharide 4'-kinase from Chlorobium phaeovibrioides (strain DSM 265 / 1930) (Prosthecochloris vibrioformis (strain DSM 265)).